The primary structure comprises 311 residues: MHCPDKESVYHIPVMLGECLEGLRIDPDGCYVDVTFGGGGHSRAIVEKLSSKGRLYGFDQDADACRNILQDERFTFVTSNFRYLANFMDYYGEDGVDGILADLGVSSHHFDEEERGFSFRSESPLLDMRMNARAGRNAAAILNEYDASSLSALFYHYGELKQARRFAASIVHYRESLSGGLQTVGQLLEAVRGLISPREEKKQLACIFQALRIEVNDELGALQQMLEAALGCLRSGGRLVVMTYHSLEDRMVKNVLRYGTVKAPDEDSLRLYGAPQSPWQQITRKPLTASTKELSDNPRSRSAKLRIAEKI.

S-adenosyl-L-methionine is bound by residues 39–41 (GGH), Asp-59, Phe-81, Asp-102, and His-109.

Belongs to the methyltransferase superfamily. RsmH family.

It is found in the cytoplasm. It catalyses the reaction cytidine(1402) in 16S rRNA + S-adenosyl-L-methionine = N(4)-methylcytidine(1402) in 16S rRNA + S-adenosyl-L-homocysteine + H(+). Specifically methylates the N4 position of cytidine in position 1402 (C1402) of 16S rRNA. The polypeptide is Ribosomal RNA small subunit methyltransferase H (Porphyromonas gingivalis (strain ATCC BAA-308 / W83)).